The chain runs to 383 residues: Chaperone protein DnaJ (383 aa).

Positions 5-69 (DYYDILGVSK…QKRAQYDQFG (65 aa)) constitute a J domain. Residues 138-222 (GKTTTIKYDR…CHGAGHVHER (85 aa)) form a CR-type zinc finger. Zn(2+) is bound by residues Cys151, Cys154, Cys168, Cys171, Cys194, Cys197, Cys210, and Cys213. 4 CXXCXGXG motif repeats span residues 151–158 (CKTCHGTG), 168–175 (CPRCHGAG), 194–201 (CPECNGTG), and 210–217 (CDTCHGAG).

This sequence belongs to the DnaJ family. Homodimer. The cofactor is Zn(2+).

Its subcellular location is the cytoplasm. In terms of biological role, participates actively in the response to hyperosmotic and heat shock by preventing the aggregation of stress-denatured proteins and by disaggregating proteins, also in an autonomous, DnaK-independent fashion. Unfolded proteins bind initially to DnaJ; upon interaction with the DnaJ-bound protein, DnaK hydrolyzes its bound ATP, resulting in the formation of a stable complex. GrpE releases ADP from DnaK; ATP binding to DnaK triggers the release of the substrate protein, thus completing the reaction cycle. Several rounds of ATP-dependent interactions between DnaJ, DnaK and GrpE are required for fully efficient folding. Also involved, together with DnaK and GrpE, in the DNA replication of plasmids through activation of initiation proteins. The chain is Chaperone protein DnaJ from Limosilactobacillus reuteri (strain DSM 20016) (Lactobacillus reuteri).